We begin with the raw amino-acid sequence, 602 residues long: Glutamine--fructose-6-phosphate aminotransferase [isomerizing] (602 aa).

Catalysis depends on Cys-2, which acts as the Nucleophile; for GATase activity. A Glutamine amidotransferase type-2 domain is found at 2 to 219 (CGIIGYIGDR…DGEYAILTKD (218 aa)). 2 SIS domains span residues 280 to 420 (VAEE…VLGT) and 453 to 592 (LAET…PDKP). Catalysis depends on Lys-597, which acts as the For Fru-6P isomerization activity.

As to quaternary structure, homodimer.

It localises to the cytoplasm. It carries out the reaction D-fructose 6-phosphate + L-glutamine = D-glucosamine 6-phosphate + L-glutamate. Functionally, catalyzes the first step in hexosamine metabolism, converting fructose-6P into glucosamine-6P using glutamine as a nitrogen source. This is Glutamine--fructose-6-phosphate aminotransferase [isomerizing] from Thermococcus kodakarensis (strain ATCC BAA-918 / JCM 12380 / KOD1) (Pyrococcus kodakaraensis (strain KOD1)).